The primary structure comprises 318 residues: UAP56-interacting factor (318 aa).

Met1 is subject to N-acetylmethionine. A disordered region spans residues 1–25 (MNRFGTRLVGATATSSPPPKARSNE). Position 14 is a phosphothreonine (Thr14). Residues Ser16 and Ser23 each carry the phosphoserine modification. The UAP56-binding motif signature appears at 26–44 (NLDKIDMSLDDIIKLNRKE). Ser61 carries the post-translational modification Phosphoserine. The segment at 79–100 (GFGKTSLNRRGRVMPGKRRPNG) is disordered. Residues 85–98 (LNRRGRVMPGKRRP) are compositionally biased toward basic residues. Ser118 is modified (phosphoserine). Lys140 is covalently cross-linked (Glycyl lysine isopeptide (Lys-Gly) (interchain with G-Cter in SUMO1)). Lys261 is covalently cross-linked (Glycyl lysine isopeptide (Lys-Gly) (interchain with G-Cter in SUMO2)).

Belongs to the UIF family. In terms of assembly, interacts with CHTOP. Interacts with DDX39B/UAP56 and NXF1; interaction with DDX39B/UAP56 and NXF1 are mutually exclusive. Interacts with SSRP1; required for its recruitment to mRNAs. As to expression, expressed in a wide variety of cancer types.

The protein resides in the nucleus. It localises to the nucleoplasm. It is found in the nucleus speckle. Required for mRNA export from the nucleus to the cytoplasm. Acts as an adapter that uses the DDX39B/UAP56-NFX1 pathway to ensure efficient mRNA export and delivering to the nuclear pore. Associates with spliced and unspliced mRNAs simultaneously with ALYREF/THOC4. The polypeptide is UAP56-interacting factor (FYTTD1) (Homo sapiens (Human)).